The primary structure comprises 62 residues: MANTNKLVAPGSAAAIDQMKYEIASEFGVNLGPEATARANGSVGGEITKRLVQMAEQQLGGK.

Belongs to the alpha/beta-type SASP family.

In terms of biological role, SASP are bound to spore DNA. They are double-stranded DNA-binding proteins that cause DNA to change to an a-like conformation. They protect the DNA backbone from chemical and enzymatic cleavage and are thus involved in dormant spore's high resistance to UV light. This Priestia megaterium (Bacillus megaterium) protein is Small, acid-soluble spore protein A (sasP-A).